A 166-amino-acid chain; its full sequence is Regulator of ribonuclease activity A (166 aa).

The protein belongs to the RraA family. As to quaternary structure, homotrimer. Binds to both RNA-binding sites in the C-terminal region of Rne and to RhlB.

It is found in the cytoplasm. Functionally, globally modulates RNA abundance by binding to RNase E (Rne) and regulating its endonucleolytic activity. Can modulate Rne action in a substrate-dependent manner by altering the composition of the degradosome. Modulates RNA-binding and helicase activities of the degradosome. The protein is Regulator of ribonuclease activity A of Actinobacillus succinogenes (strain ATCC 55618 / DSM 22257 / CCUG 43843 / 130Z).